The sequence spans 485 residues: MHLYNTMEKKKEPLIPIISGKLGIYVCGITAYDFSHIGHARSAIVFDILVRLLRYQGYDVTFIRNFTDIDDKIINRANKEGRSSKEVAEEFINAFHEDMDRLGVLNADIEPKATDYIPEMIECCQKLLEADKAYITASGDVYFRVRSFPDYGKLSGRTPDELRIGVRIVPSEEKEDPLDFVLWKAAKPGEPSWESPWGRGRPGWHIECSAMSEKCWPLPLDIHGGGIDLIFPHHENEIAQTESIVNKPLAKIWMHNGLVQVNSEKMSKSLGNFKIVRDILEAYLPETLRFFLLKKHYRSPIDFSFEGMNETERSQKRVYECIAEVDKALERKSWDSGGSSSSILAELDEQFSLFMSALEDDCNTAAGLGHLFNIIHIVRRALDDKALYSTTDGKVVFEQFREIIRKVDILLGVFGQKPNSFLQDLKTIRIIRNKIDVNQVEELLSKRRQAREEKNFVQADEVRNTLASLGIEIRDTSEGQVWDIL.

Residue cysteine 27 participates in Zn(2+) binding. Residues 29–39 carry the 'HIGH' region motif; the sequence is ITAYDFSHIGH. The Zn(2+) site is built by cysteine 208, histidine 233, and glutamate 237. The short motif at 265-269 is the 'KMSKS' region element; it reads KMSKS. An ATP-binding site is contributed by lysine 268.

It belongs to the class-I aminoacyl-tRNA synthetase family. Monomer. Requires Zn(2+) as cofactor.

It localises to the cytoplasm. The catalysed reaction is tRNA(Cys) + L-cysteine + ATP = L-cysteinyl-tRNA(Cys) + AMP + diphosphate. This chain is Cysteine--tRNA ligase, found in Lawsonia intracellularis (strain PHE/MN1-00).